Here is a 1096-residue protein sequence, read N- to C-terminus: Inactive phospholipase C-like protein 1 (1096 aa).

Positions 1 to 101 (MAEGAASREA…KKTVSFSSMP (101 aa)) are disordered. The segment covering 26–41 (GADAASGDAAPEASGG) has biased composition (low complexity). Phosphoserine occurs at positions 48 and 78. The tract at residues 83 to 222 (PSNQKCGGRK…NIWVSGLRYL (140 aa)) is interaction with PPP1C. Thr94 bears the Phosphothreonine mark. Ser96 is modified (phosphoserine). The region spanning 114 to 224 (SFMQAGCELK…WVSGLRYLVS (111 aa)) is the PH domain. The 145-residue stretch at 399 to 543 (QDMTQPLSHY…LKHMIIVKGK (145 aa)) folds into the PI-PLC X-box domain. Residues 544 to 568 (KLPSESDLLEGEVTDEDEEAEMSRR) form an interaction with GABA A beta subunit region. Thr557 carries the post-translational modification Phosphothreonine. The residue at position 570 (Ser570) is a Phosphoserine. The PI-PLC Y-box domain maps to 586–702 (LSDLVSICKS…GYVLRPSIMR (117 aa)). The region spanning 702–831 (RDEVSYFSAN…PGYRHVPLRS (130 aa)) is the C2 domain. A coiled-coil region spans residues 1040 to 1060 (DLLKNAKNEAVENIKQIQLAC). The interval 1067–1096 (KGPGSAAEAKGKRSLEAIEEKESSEENGKL) is disordered. The span at 1075-1096 (AKGKRSLEAIEEKESSEENGKL) shows a compositional bias: basic and acidic residues. Ser1080 is subject to Phosphoserine.

This sequence belongs to the PRIP family. As to quaternary structure, interacts with PPP2CA, GABA receptor beta subunits, GABA receptor gamma-2 subunits. Interacts with Ins(1,4,5)P3, Ins(1,4,5,6)P4, GABARAP, and PPP1C. May form a ternary complex with GABA receptor beta subunit and GABARAP. The formation of a ternary complex with GABA receptor beta subunit and GABARAP could be the key step for facilitating the association of GABARAP with the GABA receptor gamma-2 subunit and to allow it to be transported at the right destination. Post-translationally, phosphorylation of Thr-94 resulted in dissociation of PPP1C from PRIP1. In vitro, phosphorylated by the catalytic subunit of PKA. Expressed in brain. Found in the granular cell and Purkinje cell layers in the cerebellum; and in the hippocampal pyramidal cells, dentate granule cells and pyramidal granule cells of the cerebral cortex in the cerebrum.

The protein resides in the cytoplasm. Its function is as follows. Involved in an inositol phospholipid-based intracellular signaling cascade. Shows no PLC activity to phosphatidylinositol 4,5-bisphosphate and phosphatidylinositol. Component in the phospho-dependent endocytosis process of GABA A receptor. Acts as an inhibitor of PPP1C. This Rattus norvegicus (Rat) protein is Inactive phospholipase C-like protein 1 (Plcl1).